Consider the following 256-residue polypeptide: 1-(5-phosphoribosyl)-5-[(5-phosphoribosylamino)methylideneamino] imidazole-4-carboxamide isomerase (256 aa).

The Proton acceptor role is filled by aspartate 8. Aspartate 130 serves as the catalytic Proton donor.

This sequence belongs to the HisA/HisF family.

It localises to the cytoplasm. It carries out the reaction 1-(5-phospho-beta-D-ribosyl)-5-[(5-phospho-beta-D-ribosylamino)methylideneamino]imidazole-4-carboxamide = 5-[(5-phospho-1-deoxy-D-ribulos-1-ylimino)methylamino]-1-(5-phospho-beta-D-ribosyl)imidazole-4-carboxamide. It functions in the pathway amino-acid biosynthesis; L-histidine biosynthesis; L-histidine from 5-phospho-alpha-D-ribose 1-diphosphate: step 4/9. This chain is 1-(5-phosphoribosyl)-5-[(5-phosphoribosylamino)methylideneamino] imidazole-4-carboxamide isomerase, found in Chlorobium phaeobacteroides (strain DSM 266 / SMG 266 / 2430).